The primary structure comprises 155 residues: 1,4-dihydroxy-2-naphthoyl-CoA hydrolase (155 aa).

The active site involves Asp22.

It belongs to the 4-hydroxybenzoyl-CoA thioesterase family. DHNA-CoA hydrolase subfamily.

It carries out the reaction 1,4-dihydroxy-2-naphthoyl-CoA + H2O = 1,4-dihydroxy-2-naphthoate + CoA + H(+). The protein operates within cofactor biosynthesis; phylloquinone biosynthesis. It functions in the pathway quinol/quinone metabolism; 1,4-dihydroxy-2-naphthoate biosynthesis; 1,4-dihydroxy-2-naphthoate from chorismate: step 7/7. Its function is as follows. Catalyzes the hydrolysis of 1,4-dihydroxy-2-naphthoyl-CoA (DHNA-CoA) to 1,4-dihydroxy-2-naphthoate (DHNA), a reaction involved in phylloquinone (vitamin K1) biosynthesis. The polypeptide is 1,4-dihydroxy-2-naphthoyl-CoA hydrolase (Prochlorococcus marinus (strain SARG / CCMP1375 / SS120)).